A 144-amino-acid polypeptide reads, in one-letter code: Large ribosomal subunit protein uL16 (144 aa).

The protein belongs to the universal ribosomal protein uL16 family. As to quaternary structure, part of the 50S ribosomal subunit.

In terms of biological role, binds 23S rRNA and is also seen to make contacts with the A and possibly P site tRNAs. In Bacillus cereus (strain ATCC 10987 / NRS 248), this protein is Large ribosomal subunit protein uL16.